We begin with the raw amino-acid sequence, 195 residues long: dTTP/UTP pyrophosphatase (195 aa).

D73 acts as the Proton acceptor in catalysis.

Belongs to the Maf family. YhdE subfamily. The cofactor is a divalent metal cation.

It is found in the cytoplasm. The enzyme catalyses dTTP + H2O = dTMP + diphosphate + H(+). It carries out the reaction UTP + H2O = UMP + diphosphate + H(+). Nucleoside triphosphate pyrophosphatase that hydrolyzes dTTP and UTP. May have a dual role in cell division arrest and in preventing the incorporation of modified nucleotides into cellular nucleic acids. The protein is dTTP/UTP pyrophosphatase of Desulfotalea psychrophila (strain LSv54 / DSM 12343).